The chain runs to 685 residues: Stromal interaction molecule 1 (685 aa).

The N-terminal stretch at 1–22 (MDVCARLALWLLWGLLLHQGQS) is a signal peptide. Topologically, residues 23–213 (LSHSHSEKNT…LLTRHNHLKD (191 aa)) are extracellular. The tract at residues 24–43 (SHSHSEKNTGASSGATSEES) is disordered. The segment covering 32-41 (TGASSGATSE) has biased composition (low complexity). EF-hand domains are found at residues 64–97 (SFEA…EDLN) and 102–126 (TVKH…AWKS). 5 residues coordinate Ca(2+): Asp76, Asp78, Asn80, Asp82, and Glu87. N-linked (GlcNAc...) asparagine glycans are attached at residues Asn131 and Asn171. The SAM domain maps to 132–200 (WTVDEVIQWL…QLKALDTVLF (69 aa)). Residues 214 to 234 (FMLVVSIVIGVGGCWFAYIQN) traverse the membrane as a helical segment. At 235–685 (RYSKEHMKKM…LKIFKKPLKK (451 aa)) the chain is on the cytoplasmic side. A coiled-coil region spans residues 248 to 442 (LEGLHRAEQS…IEILCGFQIV (195 aa)). Ser257 is subject to Phosphoserine. The SOAR/CAD stretch occupies residues 344 to 442 (PEALQKWLQL…IEILCGFQIV (99 aa)). The segment at 475-483 (DDVDDMDEE) is contributes to fast Ca(2+)-dependent inactivation of CRAC channels. Over residues 490 to 499 (MQSPSLQSSV) the composition is skewed to low complexity. Residues 490–541 (MQSPSLQSSVRQRLTEPQLGLGSQRDLTHSDSESSLHMSDRQRVAPKPPQMG) form a disordered region. The residue at position 504 (Thr504) is a Phosphothreonine. At Ser512 the chain carries Phosphoserine. Basic and acidic residues predominate over residues 515 to 532 (DLTHSDSESSLHMSDRQR). Phosphothreonine is present on Thr517. Residues Ser519, Ser521, Ser523, Ser524, Ser567, Ser575, Ser602, Ser608, Ser618, Ser621, and Ser628 each carry the phosphoserine modification. The interval 596 to 685 (LMELNPSVPP…LKIFKKPLKK (90 aa)) is disordered. Over residues 608-620 (SPLLDSSHSLSPS) the composition is skewed to low complexity. The Microtubule tip localization signal motif lies at 642–645 (TRIP). Acidic residues predominate over residues 655 to 666 (EEDNGSIGEETD). Ser660 is modified (phosphoserine). A Phosphothreonine modification is found at Thr665. Ser668 carries the post-translational modification Phosphoserine. Residues 670–685 (GRKKFPLKIFKKPLKK) show a composition bias toward basic residues. The tract at residues 672-685 (KKFPLKIFKKPLKK) is required for generation of inwardly rectifying CRAC currents.

As to quaternary structure, monomer in the presence of Ca(2+). It oligomerizes in absence of Ca(2+). Forms homooligomers and heterooligomers with STIM2. Interacts with pore-forming subunits of CRAC channels, ORAI1, ORAI2 and ORAI3; this interaction is potentiated upon Ca(2+) store depletion. Interacts (via the transmembrane region and the SOAR/CAD domain) with SPPL3; the interaction promotes the binding of STIM1 to ORAI1. Interacts with ORAI1. Interacts with MAPRE1; probably required for targeting to the growing microtubule plus ends. Interacts with CRACR2A/EFCAB4B; the interaction is direct and takes place in absence of Ca(2+). Forms a complex with CRACR2A/EFCAB4B and ORAI1 at low concentration of Ca(2+), the complex dissociates at elevated Ca(2+) concentrations. Interacts with SARAF, promoting a slow inactivation of STIM1-dependent SOCE activity, possibly by facilitating the deoligomerization of STIM1. Interacts with EFHB; the interaction takes place upon Ca(2+)-store depletion and inhibits the association with SARAF. Interacts with ASPH. Interacts with SLC35G1; intracellular Ca(2+)-dependent. May interact with ATP1A1, ATP2A2, ATP2B1, ATP2B4, KPNB1 and XPO1; through SLC35G1. Interacts with STIMATE, promoting STIM1 conformational switch. Interacts with TMEM178A. Interacts with CASQ1 (via C-terminal end and preferentially with the monomeric form); this interaction increases in response to a depletion of intracellular Ca(2+), decreases both STIM1 aggregation and clustering, interaction of STIM1 with ORAI1 and store-operated Ca(2+) entry (SOCE) activity. Interacts with ADCY8. Interacts with TMEM203. In terms of processing, glycosylation is required for cell surface expression. Phosphorylated predominantly on Ser residues. In terms of tissue distribution, expressed in maturation-stage ameloblasts (at protein level). Expressed in all tissues examined and in many cell types, including bone marrow stroma, fibroblast, B-cell precursors, lymphoma and erythroleukemia.

Its subcellular location is the cell membrane. It is found in the endoplasmic reticulum membrane. It localises to the sarcoplasmic reticulum. The protein resides in the cytoplasm. The protein localises to the cytoskeleton. Acts as a Ca(2+) sensor that gates two major inward rectifying Ca(2+) channels at the plasma membrane: Ca(2+) release-activated Ca(2+) (CRAC) channels and arachidonate-regulated Ca(2+)-selective (ARC) channels. Plays a role in mediating store-operated Ca(2+) entry (SOCE), a Ca(2+) influx following depletion of intracellular Ca(2+) stores. Upon Ca(2+) depletion, translocates from the endoplasmic reticulum to the plasma membrane where it activates CRAC channel pore-forming subunits ORA1, ORA2 and ORAI3 to generate sustained and oscillatory Ca(2+) entry. Involved in enamel formation. This chain is Stromal interaction molecule 1 (Stim1), found in Mus musculus (Mouse).